A 79-amino-acid polypeptide reads, in one-letter code: NADH-ubiquinone oxidoreductase chain 4 (79 aa).

2 helical membrane-spanning segments follow: residues 24 to 44 (SYTL…LANI) and 54 to 74 (LLIN…WFLL).

Belongs to the complex I subunit 4 family.

It localises to the mitochondrion membrane. It carries out the reaction a ubiquinone + NADH + 5 H(+)(in) = a ubiquinol + NAD(+) + 4 H(+)(out). Its function is as follows. Core subunit of the mitochondrial membrane respiratory chain NADH dehydrogenase (Complex I) that is believed to belong to the minimal assembly required for catalysis. Complex I functions in the transfer of electrons from NADH to the respiratory chain. The immediate electron acceptor for the enzyme is believed to be ubiquinone. The sequence is that of NADH-ubiquinone oxidoreductase chain 4 (ND4) from Simulium vittatum (Striped black fly).